A 464-amino-acid chain; its full sequence is Citrate synthase, mitochondrial (464 aa).

A mitochondrion-targeting transit peptide spans 1–27 (MALLTAATRLLGAKNSSCLVLAARHAS). The SIFI-degron motif lies at 2–21 (ALLTAATRLLGAKNSSCLVL). At lysine 57 the chain carries N6-succinyllysine. Lysine 76 carries the N6-acetyllysine; alternate modification. N6-succinyllysine; alternate is present on lysine 76. Residues lysine 103 and lysine 193 each carry the N6-succinyllysine modification. Serine 226 is subject to Phosphoserine. Histidine 301 is an active-site residue. 2 positions are modified to N6-acetyllysine; alternate: lysine 321 and lysine 327. N6-succinyllysine; alternate is present on residues lysine 321 and lysine 327. The active site involves histidine 347. Oxaloacetate is bound at residue arginine 356. Position 375 is an N6-acetyllysine; alternate (lysine 375). An N6-succinyllysine; alternate modification is found at lysine 375. Lysine 382 is modified (N6-acetyllysine). Lysine 393 is modified (N6-acetyllysine; alternate). At lysine 393 the chain carries N6-succinyllysine; alternate. Residue lysine 395 is modified to N6,N6,N6-trimethyllysine. The active site involves aspartate 402. Arginine 428 and arginine 448 together coordinate oxaloacetate. Lysine 450 is modified (N6-succinyllysine). At lysine 459 the chain carries N6-acetyllysine; alternate. Position 459 is an N6-succinyllysine; alternate (lysine 459).

The protein belongs to the citrate synthase family. As to quaternary structure, homodimer. Post-translationally, methylated. Trimethylation at Lys-395 by CSKMT decreases citrate synthase activity. In response to mitochondrial stress, the precursor protein is ubiquitinated by the SIFI complex in the cytoplasm before mitochondrial import, leading to its degradation. Within the SIFI complex, UBR4 initiates ubiquitin chain that are further elongated or branched by KCMF1.

The protein resides in the mitochondrion matrix. It catalyses the reaction oxaloacetate + acetyl-CoA + H2O = citrate + CoA + H(+). It participates in carbohydrate metabolism; tricarboxylic acid cycle; isocitrate from oxaloacetate: step 1/2. Its function is as follows. Key enzyme of the Krebs tricarboxylic acid cycle which catalyzes the synthesis of citrate from acetyl coenzyme A and oxaloacetate. The polypeptide is Citrate synthase, mitochondrial (Cs) (Mus musculus (Mouse)).